Here is a 381-residue protein sequence, read N- to C-terminus: 1-deoxy-D-xylulose 5-phosphate reductoisomerase (381 aa).

6 residues coordinate NADPH: Thr-11, Gly-12, Ser-13, Ile-14, Asn-37, and Asn-121. Lys-122 provides a ligand contact to 1-deoxy-D-xylulose 5-phosphate. Glu-123 serves as a coordination point for NADPH. Residue Asp-147 coordinates Mn(2+). 1-deoxy-D-xylulose 5-phosphate is bound by residues Ser-148, Glu-149, Ser-173, and His-196. Glu-149 contacts Mn(2+). Gly-202 contributes to the NADPH binding site. 4 residues coordinate 1-deoxy-D-xylulose 5-phosphate: Ser-209, Asn-214, Lys-215, and Glu-218. Residue Glu-218 coordinates Mn(2+).

Belongs to the DXR family. It depends on Mg(2+) as a cofactor. Mn(2+) is required as a cofactor.

The enzyme catalyses 2-C-methyl-D-erythritol 4-phosphate + NADP(+) = 1-deoxy-D-xylulose 5-phosphate + NADPH + H(+). Its pathway is isoprenoid biosynthesis; isopentenyl diphosphate biosynthesis via DXP pathway; isopentenyl diphosphate from 1-deoxy-D-xylulose 5-phosphate: step 1/6. Its function is as follows. Catalyzes the NADPH-dependent rearrangement and reduction of 1-deoxy-D-xylulose-5-phosphate (DXP) to 2-C-methyl-D-erythritol 4-phosphate (MEP). The polypeptide is 1-deoxy-D-xylulose 5-phosphate reductoisomerase (Ruminiclostridium cellulolyticum (strain ATCC 35319 / DSM 5812 / JCM 6584 / H10) (Clostridium cellulolyticum)).